Consider the following 88-residue polypeptide: MANSAQAKKRARQNVKARKHNASLRSMVRTYIKRTLSAIAGGDYAVATEAYKKAVPVIDRMADKGIIHKNKAARHKSRLNAQVKALAN.

Positions 1–21 (MANSAQAKKRARQNVKARKHN) are disordered. The span at 7-21 (AKKRARQNVKARKHN) shows a compositional bias: basic residues.

This sequence belongs to the bacterial ribosomal protein bS20 family.

In terms of biological role, binds directly to 16S ribosomal RNA. This Acinetobacter baumannii (strain AB307-0294) protein is Small ribosomal subunit protein bS20.